A 225-amino-acid chain; its full sequence is Polyadenylate-binding protein 2 (225 aa).

The segment covering 1–36 (MADEDISLNEDQLLESMEETNGEQETEIVTETEEEG) has biased composition (acidic residues). Positions 1–42 (MADEDISLNEDQLLESMEETNGEQETEIVTETEEEGSMQIDP) are disordered. The stretch at 14 to 74 (LESMEETNGE…QSEVDKQMAG (61 aa)) forms a coiled coil. Residues 96–173 (RSVYVGNVDY…RQIKVMSKRT (78 aa)) form the RRM domain.

It localises to the nucleus. The protein localises to the cytoplasm. Its function is as follows. Involved in the 3'-end formation of mRNA precursors (pre-mRNA) by the addition of a poly(A) tail of 200-250 nt to the upstream cleavage product. Stimulates poly(A) polymerase (PAPOLA) conferring processivity on the poly(A) tail elongation reaction and also controls the poly(A) tail length. Increases the affinity of poly(A) polymerase for RNA. Binds to poly(A) and to poly(G) with high affinity. May protect the poly(A) tail from degradation. The chain is Polyadenylate-binding protein 2 from Drosophila pseudoobscura pseudoobscura (Fruit fly).